A 411-amino-acid polypeptide reads, in one-letter code: Multidrug resistance protein MdtA (411 aa).

Residues 1-19 (MNAKRIRGLLILAAVIAIA) form the signal peptide. Polar residues predominate over residues 31–49 (PAAPGTSEQHAARTSHSEN). A disordered region spans residues 31-58 (PAAPGTSEQHAARTSHSENSGSGGGRRA).

This sequence belongs to the membrane fusion protein (MFP) (TC 8.A.1) family. As to quaternary structure, part of a tripartite efflux system composed of MdtA, MdtB and MdtC.

Its subcellular location is the cell inner membrane. This Pectobacterium atrosepticum (strain SCRI 1043 / ATCC BAA-672) (Erwinia carotovora subsp. atroseptica) protein is Multidrug resistance protein MdtA.